Here is a 325-residue protein sequence, read N- to C-terminus: Aldose 1-epimerase (325 aa).

73 to 74 (NR) lines the substrate pocket. The active-site Proton donor is the H177. D230 provides a ligand contact to substrate. E283 functions as the Proton acceptor in the catalytic mechanism.

The protein belongs to the aldose epimerase family.

The enzyme catalyses alpha-D-glucose = beta-D-glucose. It participates in carbohydrate metabolism; hexose metabolism. The sequence is that of Aldose 1-epimerase (galM) from Bacillus subtilis (strain 168).